The following is a 722-amino-acid chain: Capsid protein VP1 (722 aa).

Residues 14–59 are phospholipase A2-like; sequence YLGPGNSLDQGEPTNPSDAAAKEHDEAYAAYLRSGKNPYLYFSPAD. Disordered regions lie at residues 90 to 115, 136 to 179, and 497 to 531; these read VLTDTPDHPSTSRPTKPTKRSKPPPH, LAPM…VGIS, and AGRGGAQTDENQAADGDPRYAFGRQHGQKTTTTGE. A compositionally biased stretch (gly residues) spans 161-178; sequence SGNGSGGGGGGGSGGVGI.

The protein belongs to the parvoviridae capsid protein family.

Its subcellular location is the virion. Capsid protein self-assembles to form an icosahedral capsid with a T=1 symmetry, about 22 nm in diameter, and consisting of 60 copies of two size variants of the capsid proteins, VP1 and VP2, which differ by the presence of an N-terminal extension in the minor protein VP1. The capsid encapsulates the genomic ssDNA. Capsid proteins are responsible for the attachment to host cell receptors. This attachment induces virion internalization predominantly through clathrin-dependent endocytosis. Binding to the host receptors also induces capsid rearrangements leading to surface exposure of VP1 N-terminus, specifically its phospholipase A2-like region and putative nuclear localization signal(s). VP1 N-terminus might serve as a lipolytic enzyme to breach the endosomal membrane during entry into host cell and might contribute to virus transport to the nucleus. The protein is Capsid protein VP1 of Neovison vison (American mink).